Reading from the N-terminus, the 135-residue chain is Salivary protein 15 Iper-1 (135 aa).

Residues 1–22 form the signal peptide; that stretch reads MESFVAMKVVCILFLFVVAAEA. Asn-93 and Asn-104 each carry an N-linked (GlcNAc...) asparagine glycan. The interval 116–135 is CD4-binding; the sequence is GPNKQTCADKSKCVGHIPGC.

The protein belongs to the salp15 family. In terms of assembly, interacts with host CD4. Interacts with host DC-SIGN (CD209). (Microbial infection) Interacts with Borrelia outer surface protein C (OspC). As to expression, expressed in salivary glands from feeding female ticks. Highly expressed 4 days after start of feeding.

The protein localises to the secreted. Salivary tick protein that downregulates host immune system by binding to both dendritic cells, and CD4(+) T cells. Specifically binds to the CD4 coreceptor on T cells. This interaction prevents the activation of the Src kinase, Lck, and its downstream substrate Zap-70, and results in deficient activation of PLCgamma1, the repression of calcium fluxes triggered by T-cell antigen receptor (TCR) ligation, and a subsequent reduction in interleukin-2 production. This salivary protein also binds to DC-SIGN (CD209) on dendritic cells (DC) and activates the Raf-1 kinase/MEK signaling pathway that results in down-regulating expression of pro-inflammatory cytokines. Furthermore, it inhibits T cell proliferation induced by DCs. It also inhibits in vitro keratinocyte inflammation induced by Borrelia burgdorferi or by the major outer surface protein (OspC) of Borrelia. In addition, it downregulates chemokines and monocyte chemoattractant protein 1, as well as several antimicrobial peptides such as defensins, cathelicidin, psoriasin, and RNase 7. Apart from its immunomodulatory activities, it is also associated with protection of Borrelia spirochetes from antibody-mediated killing through its binding to OspC. In vivo, tests on different immune disease animal models show promising therapeutic results, e.g., in inhibiting HIV infection, experimental autoimmune encephalomyelitis, transplantation rejection, and asthma. Its function is as follows. (Microbial infection) Protects Borrelia garinii from anti-Borrelia antibody-mediated cytotoxicity in vitro. May facilitate B.garinii transmission in mouse model. Functionally, (Microbial infection) Protects Borrelia burgdorferi from anti-Borrelia antibody-mediated cytotoxicity in vitro. In terms of biological role, (Microbial infection) Protects Borrelia afzelii from anti-Borrelia antibody-mediated cytotoxicity in vitro. This is Salivary protein 15 Iper-1 from Ixodes persulcatus (Taiga tick).